The chain runs to 363 residues: UDP-N-acetylglucosamine--N-acetylmuramyl-(pentapeptide) pyrophosphoryl-undecaprenol N-acetylglucosamine transferase (363 aa).

UDP-N-acetyl-alpha-D-glucosamine-binding positions include 14–16, Arg171, Ser200, and Gln290; that span reads TGG.

Belongs to the glycosyltransferase 28 family. MurG subfamily.

Its subcellular location is the cell inner membrane. It carries out the reaction di-trans,octa-cis-undecaprenyl diphospho-N-acetyl-alpha-D-muramoyl-L-alanyl-D-glutamyl-meso-2,6-diaminopimeloyl-D-alanyl-D-alanine + UDP-N-acetyl-alpha-D-glucosamine = di-trans,octa-cis-undecaprenyl diphospho-[N-acetyl-alpha-D-glucosaminyl-(1-&gt;4)]-N-acetyl-alpha-D-muramoyl-L-alanyl-D-glutamyl-meso-2,6-diaminopimeloyl-D-alanyl-D-alanine + UDP + H(+). Its pathway is cell wall biogenesis; peptidoglycan biosynthesis. Cell wall formation. Catalyzes the transfer of a GlcNAc subunit on undecaprenyl-pyrophosphoryl-MurNAc-pentapeptide (lipid intermediate I) to form undecaprenyl-pyrophosphoryl-MurNAc-(pentapeptide)GlcNAc (lipid intermediate II). The sequence is that of UDP-N-acetylglucosamine--N-acetylmuramyl-(pentapeptide) pyrophosphoryl-undecaprenol N-acetylglucosamine transferase from Borreliella afzelii (strain PKo) (Borrelia afzelii).